The primary structure comprises 829 residues: MNRRDFLKGIASSSFVVLGGSSVLTPLNALAKAGINEDEWLTTGSHFGAFKMKRKNGVIAEVKPFDLDKYPTDMINGIRGMVYNPSRVRYPMVRLDFLLKGHKSNTHQRGDFRFVRVTWDKALTLFKHSLDEVQTQYGPSGLHAGQTGWRATGQLHSSTSHMQRAVGMHGNYVKKIGDYSTGAGQTILPYVLGSTEVYAQGTSWPLILEHSDTIVLWSNDPYKNLQVGWNAETHESFAYLAQLKEKVKQGKIRVISIDPVVTKTQAYLGCEQLYVNPQTDVTLMLAIAHEMISKKLYDDKFIQGYSLGFEEFVPYVMGTKDGVAKTPEWAAPICGVEAHVIRDLAKTLVKGRTQFMMGWCIQRQQHGEQPYWMAAVLATMIGQIGLPGGGISYGHHYSSIGVPSSGAAAPGAFPRNLDENQKPLFDSSDFKGASSTIPVARWIDAILEPGKTIDANGSKVVYPDIKMMIFSGNNPWNHHQDRNRMKQAFHKLECVVTVDVNWTATCRFSDIVLPACTTYERNDIDVYGAYANRGILAMQKMVEPLFDSLSDFEIFTRFAAVLGKEKEYTRNMGEMEWLETLYNECKAANAGKFEMPDFATFWKQGYVHFGDGEVWTRHADFRNDPEINPLGTPSGLIEIFSRKIDQFGYDDCKGHPTWMEKTERSHGGPGSDKHPIWLQSCHPDKRLHSQMCESREYRETYAVNGREPVYISPVDAKARGIKDGDIVRVFNDRGQLLAGAVVSDNFPKGIVRIHEGAWYGPVGKDGSTEGGAEVGALCSYGDPNTLTLDIGTSKLAQACSAYTCLVEFEKYQGKVPKVSSFDGPIEVEI.

Positions 1-31 (MNRRDFLKGIASSSFVVLGGSSVLTPLNALA) form a signal peptide, tat-type signal. Ser-180 contacts Mo-bis(molybdopterin guanine dinucleotide).

This sequence belongs to the prokaryotic molybdopterin-containing oxidoreductase family. Mo-bis(molybdopterin guanine dinucleotide) serves as cofactor. In terms of processing, predicted to be exported by the Tat system. The position of the signal peptide cleavage has been experimentally proven.

The protein localises to the periplasm. The catalysed reaction is trimethylamine + 2 Fe(III)-[cytochrome c] + H2O = trimethylamine N-oxide + 2 Fe(II)-[cytochrome c] + 3 H(+). Its function is as follows. Reduces trimethylamine-N-oxide (TMAO) into trimethylamine; an anaerobic reaction coupled to energy-yielding reactions. The sequence is that of Trimethylamine-N-oxide reductase (torA) from Shewanella massilia.